We begin with the raw amino-acid sequence, 706 residues long: Serotransferrin (706 aa).

A signal peptide spans 1 to 19 (MRLAIRALLACAVLGLCLA). Transferrin-like domains lie at 23-349 (VRWC…NLRE) and 363-691 (VKWC…NLRQ). 2 disulfide bridges follow: C26-C64 and C36-C55. At R40 the chain carries Dimethylated arginine. Fe(3+)-binding residues include D79 and Y111. Cystine bridges form between C134–C215, C174–C190, C177–C198, C187–C200, and C248–C262. T136, R140, A142, and G143 together coordinate hydrogencarbonate. Y209 serves as a coordination point for Fe(3+). Residue H270 coordinates Fe(3+). Cystine bridges form between C360-C623, C366-C398, C376-C389, C423-C701, C441-C664, C474-C550, C498-C692, C508-C522, C519-C533, C590-C604, and C642-C647. The residue at position 391 (S391) is a Phosphoserine. Residues D413 and Y449 each contribute to the Fe(3+) site. Hydrogencarbonate-binding residues include T476, R480, A482, and G483. An N-linked (GlcNAc...) asparagine glycan is attached at N515. Y544 contributes to the Fe(3+) binding site. Residue H612 coordinates Fe(3+). A Phosphoserine modification is found at S693.

It belongs to the transferrin family. In terms of assembly, monomer. Part of a complex composed of SLC40A1/ferroportin, TF/transferrin and HEPH/hephaestin that transfers iron from cells to transferrin. As to expression, expressed by the liver and secreted in plasma.

It is found in the secreted. Its function is as follows. Transferrins are iron binding transport proteins which can bind two Fe(3+) ions in association with the binding of an anion, usually bicarbonate. It is responsible for the transport of iron from sites of absorption and heme degradation to those of storage and utilization. Serum transferrin may also have a further role in stimulating cell proliferation. This Equus caballus (Horse) protein is Serotransferrin (TF).